A 627-amino-acid polypeptide reads, in one-letter code: MSATQKNNITRLEQLDRQSTQPFPNSRKVYLTGSRPDIRVPVREISLADTPTAFGGEKNPPVFVYDTSGPYTDPEVRIDLRKGLPDVRSRWIDERGDTEILPGLTSEFGQARLADASLDALRFAHVRTPRRAKPGANVSQMHYAKKGIITPEMEYIAIRENMKLQEARAAGLLDQQHPGHSFGANIPKEITPEFVREEVARGRAIIPANINHTELEPMIIGRNFLVKINGNIGNSALGSSIEEEVEKLTWGIRWGADTVMDLSTGKHIHETREWILRNSPVPIGTVPIYQALEKVNGVAEDLTWEIFRDTLIEQAEQGVDYFTIHAGVLLRYVPLTAKRVTGIVSRGGSIMAKWCLAHHQENFLYTHFEEICEIMKAYDVSFSLGDGLRPGSVADANDAAQFGELETLGELTKIAWKHDVQVMIEGPGHVPMQLIKENMDKQLECCDEAPFYTLGPLTTDIAPGYDHITSGIGAAMIGWFGCAMLCYVTPKEHLGLPNKDDVKTGIITYKIAAHAADLAKGHPGAQIRDNALSKARFEFRWEDQFNLGLDPDTARAFHDETLPKDSAKVAHFCSMCGPKFCSMKITQEVRDYAKENGLSDESKAIEAGFQEQAARFKDEGSVIYRQV.

Residues 1-24 (MSATQKNNITRLEQLDRQSTQPFP) are compositionally biased toward polar residues. A disordered region spans residues 1–29 (MSATQKNNITRLEQLDRQSTQPFPNSRKV). Residues N231, M260, Y289, H325, 345–347 (SRG), 386–389 (DGLR), and E425 each bind substrate. H429 serves as a coordination point for Zn(2+). Y452 serves as a coordination point for substrate. H493 contributes to the Zn(2+) binding site. Positions 573, 576, and 581 each coordinate [4Fe-4S] cluster.

It belongs to the ThiC family. As to quaternary structure, homodimer. The cofactor is [4Fe-4S] cluster.

The catalysed reaction is 5-amino-1-(5-phospho-beta-D-ribosyl)imidazole + S-adenosyl-L-methionine = 4-amino-2-methyl-5-(phosphooxymethyl)pyrimidine + CO + 5'-deoxyadenosine + formate + L-methionine + 3 H(+). It participates in cofactor biosynthesis; thiamine diphosphate biosynthesis. Functionally, catalyzes the synthesis of the hydroxymethylpyrimidine phosphate (HMP-P) moiety of thiamine from aminoimidazole ribotide (AIR) in a radical S-adenosyl-L-methionine (SAM)-dependent reaction. The sequence is that of Phosphomethylpyrimidine synthase from Pseudomonas aeruginosa (strain LESB58).